The following is a 466-amino-acid chain: Soluble pyridine nucleotide transhydrogenase (466 aa).

36 to 45 is a binding site for FAD; that stretch reads EKESSVGGGC.

The protein belongs to the class-I pyridine nucleotide-disulfide oxidoreductase family. It depends on FAD as a cofactor.

Its subcellular location is the cytoplasm. It carries out the reaction NAD(+) + NADPH = NADH + NADP(+). In terms of biological role, conversion of NADPH, generated by peripheral catabolic pathways, to NADH, which can enter the respiratory chain for energy generation. The protein is Soluble pyridine nucleotide transhydrogenase of Vibrio parahaemolyticus serotype O3:K6 (strain RIMD 2210633).